Here is a 299-residue protein sequence, read N- to C-terminus: Nucleotide-binding protein AFE_3021 (299 aa).

11–18 (GLSGSGKS) contributes to the ATP binding site. 62–65 (DVRN) is a binding site for GTP.

Belongs to the RapZ-like family.

In terms of biological role, displays ATPase and GTPase activities. This Acidithiobacillus ferrooxidans (strain ATCC 23270 / DSM 14882 / CIP 104768 / NCIMB 8455) (Ferrobacillus ferrooxidans (strain ATCC 23270)) protein is Nucleotide-binding protein AFE_3021.